Consider the following 577-residue polypeptide: MSANQNPSVQEVLGEVLGPWSDNERLKRESHFLRGTIEQDLQDRITGGFTADNFQLIRFHGMYQQDDRDIRAERSKQKLEPLHNVMLRARMPGGIITPHQWLAIDKFATEHTLYGSIRLTTRQTFQFHGVLKPNIKLMHQTLNSIGIDSIATAGDVNRNVLCTSNPVESELHLQAYEWAKKISEHLLPKTRAYAEIWLDGEKIEGPDEEPILGSNYLPRKFKTTVVIPPHNDVDVHANDLNFVAIGENGQLVGFNVLVGGGLAMTHGDTSTYPRRADDFGFIPLEKTLEVAAAVVSTQRDWGNRSNRKNAKTKYTLDRVGVEVFKAEVEKRAGITFAPSRAYEFTSRGDRIGWVEGIDGKHHLTLFIENGRILDFPGKPLKTGVAEIAKVHQGDFRMTANQNLIVAGVPADQKPHIEQLAREHGLIDDGVSEQRINSMACVAFPTCPLAMAEAERFLPSFVTEVEGILAKHALPKEENIILRVTGCPNGCGRAMLAEIGLVGKAPGRYNLHLGGNRNGTRIPKMYKENITDTQILQEIDELVGRWASERLDGEGFGDFTIRAGIIEEVIISKRDFYA.

Positions 440, 446, 486, and 490 each coordinate [4Fe-4S] cluster. C490 provides a ligand contact to siroheme.

This sequence belongs to the nitrite and sulfite reductase 4Fe-4S domain family. As to quaternary structure, alpha(8)-beta(8). The alpha component is a flavoprotein, the beta component is a hemoprotein. The cofactor is siroheme. Requires [4Fe-4S] cluster as cofactor.

It carries out the reaction hydrogen sulfide + 3 NADP(+) + 3 H2O = sulfite + 3 NADPH + 4 H(+). It participates in sulfur metabolism; hydrogen sulfide biosynthesis; hydrogen sulfide from sulfite (NADPH route): step 1/1. Component of the sulfite reductase complex that catalyzes the 6-electron reduction of sulfite to sulfide. This is one of several activities required for the biosynthesis of L-cysteine from sulfate. This chain is Sulfite reductase [NADPH] hemoprotein beta-component, found in Vibrio cholerae serotype O1 (strain ATCC 39315 / El Tor Inaba N16961).